The primary structure comprises 145 residues: Holo-[acyl-carrier-protein] synthase (145 aa).

Mg(2+) is bound by residues aspartate 9 and glutamate 59.

It belongs to the P-Pant transferase superfamily. AcpS family. It depends on Mg(2+) as a cofactor.

The protein resides in the cytoplasm. It carries out the reaction apo-[ACP] + CoA = holo-[ACP] + adenosine 3',5'-bisphosphate + H(+). In terms of biological role, transfers the 4'-phosphopantetheine moiety from coenzyme A to a Ser of acyl-carrier-protein. The chain is Holo-[acyl-carrier-protein] synthase from Nocardia farcinica (strain IFM 10152).